The following is a 430-amino-acid chain: C-terminal-binding protein 1 (430 aa).

The tract at residues 1-59 is interaction with GLIS2 1; that stretch reads MSGVRPPIMNGPMHPRPLVALLDGRDCTVEMPILKDVATVAFCDAQSTQEIHEKVLNEA. NAD(+)-binding positions include S89, 169-174, D193, 226-232, 253-255, and D279; these read IGLGRV, CGLNEHN, and TAR. R255 is a catalytic residue. Positions 277 to 349 are interaction with GLIS2 2; sequence ALDVHESEPF…VNKDHLTAAT (73 aa). Residue E284 is part of the active site. A Phosphoserine modification is found at S289. H304 serves as the catalytic Proton donor. The interval 398–430 is disordered; the sequence is SHGLPPVAHPPHAPSPGQTVKPEADRDHTTDQL. Phosphoserine is present on S412. Residue K418 forms a Glycyl lysine isopeptide (Lys-Gly) (interchain with G-Cter in SUMO) linkage. Residues 419–430 are compositionally biased toward basic and acidic residues; sequence PEADRDHTTDQL.

Belongs to the D-isomer specific 2-hydroxyacid dehydrogenase family. In terms of assembly, homo- or heterodimer. Heterodimer with CTBP2. Interacts with ELK3 (via its PXDLS motif). Interacts with RBBP8 (via its PXDLS motif); the interaction is disrupted by binding to adenovirus E1A. Interacts with PNN, MECOM and ZFHX1B. Interacts with ZNF366 (via PXDLS motif). Interaction with SATB1 (non-acetylated form); the interaction stabilizes its attachment to DNA and promotes transcription repression. Interacts with PRDM16; the interaction represses white adipose tissue (WAT)-specific genes expression. Interacts with GLIS2, HIPK2, FOXP1, FOXP2, HDAC4, HDAC5, HDAC9, NRIP1 and WIZ. Interacts with ZNF217. Interacts with BCL6; the interaction is required for BCL6 transcriptional autoinhibition and inhibition of some BCL6 target genes. Interacts with IKZF4. Interacts with MCRIP1 (unphosphorylated form, via the PXDLS motif); competitively inhibiting CTBP-ZEB1 interaction. Interacts with Bassoon/BSN; this interaction targets and anchors CTBP1 to presynapses. Interacts with SIMC1. It depends on NAD(+) as a cofactor. The level of phosphorylation appears to be regulated during the cell cycle. Phosphorylation by HIPK2 on Ser-412 induces proteasomal degradation. In terms of processing, ADP-ribosylated; when cells are exposed to brefeldin A. Post-translationally, sumoylation on Lys-418 is promoted by the E3 SUMO-protein ligase CBX4.

It is found in the cytoplasm. The protein resides in the nucleus. It localises to the synapse. The protein localises to the synaptosome. Functionally, corepressor targeting diverse transcription regulators such as GLIS2 or BCL6. Has dehydrogenase activity. Involved in controlling the equilibrium between tubular and stacked structures in the Golgi complex. Functions in brown adipose tissue (BAT) differentiation. In Rattus norvegicus (Rat), this protein is C-terminal-binding protein 1 (Ctbp1).